The sequence spans 67 residues: MPKMKTHRGAAKRFKKTGTGKLKRSHAYTSHMFRHKSQKQKRKLRKAAIVHSGDFKRIHQMLTYKKK.

The disordered stretch occupies residues 1–41; the sequence is MPKMKTHRGAAKRFKKTGTGKLKRSHAYTSHMFRHKSQKQK.

The protein belongs to the bacterial ribosomal protein bL35 family.

The sequence is that of Large ribosomal subunit protein bL35 from Shouchella clausii (strain KSM-K16) (Alkalihalobacillus clausii).